We begin with the raw amino-acid sequence, 141 residues long: HTH-type transcriptional repressor NsrR (141 aa).

The HTH rrf2-type domain occupies 2–129 (QLTSFTDYAL…DDCTIEELLS (128 aa)). The segment at residues 28-51 (ITEVTDLFGVSRNHMVKVINRLGQ) is a DNA-binding region (H-T-H motif). The [2Fe-2S] cluster site is built by cysteine 91, cysteine 96, and cysteine 102.

Requires [2Fe-2S] cluster as cofactor.

Functionally, nitric oxide-sensitive repressor of genes involved in protecting the cell against nitrosative stress. May require iron for activity. The polypeptide is HTH-type transcriptional repressor NsrR (Vibrio campbellii (strain ATCC BAA-1116)).